A 220-amino-acid polypeptide reads, in one-letter code: Transcriptional regulatory protein LnrK (220 aa).

A Response regulatory domain is found at 3 to 119; the sequence is KIIITDDQDI…TIVKAVMTVH (117 aa). D54 is modified (4-aspartylphosphate). Residues 151–216 form the HTH luxR-type domain; that stretch reads KPNELLDLTE…QAAIYSVRYG (66 aa). Positions 175–194 form a DNA-binding region, H-T-H motif; sequence NKEIAEKLYITEGTVKNHVS.

Post-translationally, phosphorylated by LnrJ.

The protein resides in the cytoplasm. In terms of biological role, required for resistance to linearmycins, a family of antibiotic-specialized metabolites produced by some streptomycetes. Member of the two-component regulatory system LnrJ/LnrK, which induces expression of the LnrLMN ABC transporter in response to linearmycins and other polyenes. Probably binds to the promoter region of the lnrLMN operon and directly regulates its expression. May also promote biofilm formation. The polypeptide is Transcriptional regulatory protein LnrK (Bacillus subtilis (strain 168)).